Reading from the N-terminus, the 331-residue chain is Malate dehydrogenase (331 aa).

14 to 20 (GAAGSIG) contacts NAD(+). 2 residues coordinate substrate: Arg95 and Arg101. NAD(+) contacts are provided by residues Asn108, Gln115, and 132–134 (VGN). Residues Asn134 and Arg165 each coordinate substrate. The active-site Proton acceptor is the His190.

It belongs to the LDH/MDH superfamily. MDH type 2 family.

The catalysed reaction is (S)-malate + NAD(+) = oxaloacetate + NADH + H(+). Catalyzes the reversible oxidation of malate to oxaloacetate. This chain is Malate dehydrogenase, found in Rhodococcus opacus (strain B4).